A 101-amino-acid chain; its full sequence is MAKKSAVNRNEAVKALVKKFAEKRAALKAIANDETLPLEERFEARLKLAKLPRNSAAIRIRNRCEVTGRPRAYYRKLKMSRVALRELGSQGQIPGLVKSSW.

It belongs to the universal ribosomal protein uS14 family. As to quaternary structure, part of the 30S ribosomal subunit. Contacts proteins S3 and S10.

Its function is as follows. Binds 16S rRNA, required for the assembly of 30S particles and may also be responsible for determining the conformation of the 16S rRNA at the A site. This Caulobacter vibrioides (strain ATCC 19089 / CIP 103742 / CB 15) (Caulobacter crescentus) protein is Small ribosomal subunit protein uS14.